Here is a 164-residue protein sequence, read N- to C-terminus: Peptidyl-prolyl cis-trans isomerase A-like 4F (164 aa).

The PPIase cyclophilin-type domain maps to 7-163 (FFEITRDGKP…KKITIADCGQ (157 aa)).

Belongs to the cyclophilin-type PPIase family. PPIase A subfamily.

The protein localises to the cytoplasm. It catalyses the reaction [protein]-peptidylproline (omega=180) = [protein]-peptidylproline (omega=0). In terms of biological role, PPIases accelerate the folding of proteins. It catalyzes the cis-trans isomerization of proline imidic peptide bonds in oligopeptides. The chain is Peptidyl-prolyl cis-trans isomerase A-like 4F from Homo sapiens (Human).